The following is a 1082-amino-acid chain: DNA-directed RNA polymerase subunit beta (1082 aa).

It belongs to the RNA polymerase beta chain family. In terms of assembly, in plastids the minimal PEP RNA polymerase catalytic core is composed of four subunits: alpha, beta, beta', and beta''. When a (nuclear-encoded) sigma factor is associated with the core the holoenzyme is formed, which can initiate transcription.

It localises to the plastid. It is found in the chloroplast. The catalysed reaction is RNA(n) + a ribonucleoside 5'-triphosphate = RNA(n+1) + diphosphate. DNA-dependent RNA polymerase catalyzes the transcription of DNA into RNA using the four ribonucleoside triphosphates as substrates. In Euglena gracilis, this protein is DNA-directed RNA polymerase subunit beta.